A 484-amino-acid chain; its full sequence is MHQKTVAEISAALHAGEISSRELTDSLLKRIEQFDPRLNSLITVTAEQARAAADAADARLRAGEAGPLTGVPLVHKDIFCTDGVATTCGSRMLEPFRAPYDATVVRRLAEAGAVMLGKANMDEFAMGSSNETSYFGPVRNPWDLDAVPGGSSGGSAAAVAARLAPAATGTDTGGSIRQPAALSGICGLKPTYGRVSRYGMVAFASSLDQAGPFARTAEDLALLLGGMAGLDERDSTSVDHVVPDYSESLNRSIRGLRIGVPKEFFGEGLDADVRSRVEAALQVLEGEGAELVEVQLPNMELALPAYYVIAPAEASSNLARFDGVRFGHRCADPQDLEDLYKRSRAEGFGDEVQRRILVGTYALSAGYYDAYYRKAQQVRRLVADDFRQALDQVDVLAGPTSPTPAFDLGERADDPVQMYLSDIYTLGVNLAGLPGLSVPAGFSRGRPVGLQLIGGYFDEARLLNVGHKYQQVTDWHKQVPEGFE.

Catalysis depends on charge relay system residues lysine 76 and serine 151. The active-site Acyl-ester intermediate is the serine 175.

This sequence belongs to the amidase family. GatA subfamily. In terms of assembly, heterotrimer of A, B and C subunits.

The enzyme catalyses L-glutamyl-tRNA(Gln) + L-glutamine + ATP + H2O = L-glutaminyl-tRNA(Gln) + L-glutamate + ADP + phosphate + H(+). In terms of biological role, allows the formation of correctly charged Gln-tRNA(Gln) through the transamidation of misacylated Glu-tRNA(Gln) in organisms which lack glutaminyl-tRNA synthetase. The reaction takes place in the presence of glutamine and ATP through an activated gamma-phospho-Glu-tRNA(Gln). This chain is Glutamyl-tRNA(Gln) amidotransferase subunit A, found in Halorhodospira halophila (strain DSM 244 / SL1) (Ectothiorhodospira halophila (strain DSM 244 / SL1)).